The chain runs to 376 residues: Ribonucleoside-diphosphate reductase subunit beta (376 aa).

Residues Asp85, Glu116, and His119 each coordinate Fe cation. The active site involves Tyr123. Fe cation contacts are provided by Glu205, Glu239, and His242.

This sequence belongs to the ribonucleoside diphosphate reductase small chain family. In terms of assembly, tetramer of two alpha and two beta subunits. The cofactor is Fe cation.

It catalyses the reaction a 2'-deoxyribonucleoside 5'-diphosphate + [thioredoxin]-disulfide + H2O = a ribonucleoside 5'-diphosphate + [thioredoxin]-dithiol. In terms of biological role, provides the precursors necessary for DNA synthesis. Catalyzes the biosynthesis of deoxyribonucleotides from the corresponding ribonucleotides. The chain is Ribonucleoside-diphosphate reductase subunit beta (nrdB) from Buchnera aphidicola subsp. Schizaphis graminum (strain Sg).